The sequence spans 381 residues: Bifunctional polyhydroxybutyrate synthase / ABC transporter periplasmic binding protein (381 aa).

An N-terminal signal peptide occupies residues 1 to 22 (MSKTFARSSLCALSMTIMTAHA).

It belongs to the bacterial solute-binding protein PotD/PotF family.

Its subcellular location is the periplasm. The enzyme catalyses (3R)-3-hydroxybutanoyl-CoA + [(3R)-hydroxybutanoate](n) = [(3R)-hydroxybutanoate](n+1) + CoA. In terms of biological role, catalyzes the formation of short polymers of R-3-hydroxybutyrate (cPHB). Involved in natural transformation. Probably part of the ABC transporter complex YdcSTUV. During natural transformation, may bind dsDNA and convey it to the inner membrane channel formed by YdcV. This is Bifunctional polyhydroxybutyrate synthase / ABC transporter periplasmic binding protein (ydcS) from Escherichia coli (strain K12).